Consider the following 521-residue polypeptide: Glutamyl-tRNA(Gln) amidotransferase subunit A, mitochondrial (521 aa).

Active-site charge relay system residues include Lys61 and Ser139. Ser163 functions as the Acyl-ester intermediate in the catalytic mechanism.

It belongs to the amidase family. GatA subfamily. In terms of assembly, subunit of the heterotrimeric GatCAB amidotransferase (AdT) complex, composed of A, B and C subunits.

It localises to the mitochondrion. It carries out the reaction L-glutamyl-tRNA(Gln) + L-glutamine + ATP + H2O = L-glutaminyl-tRNA(Gln) + L-glutamate + ADP + phosphate + H(+). Functionally, allows the formation of correctly charged Gln-tRNA(Gln) through the transamidation of misacylated Glu-tRNA(Gln) in the mitochondria. The reaction takes place in the presence of glutamine and ATP through an activated gamma-phospho-Glu-tRNA(Gln). This chain is Glutamyl-tRNA(Gln) amidotransferase subunit A, mitochondrial, found in Ajellomyces capsulatus (strain G186AR / H82 / ATCC MYA-2454 / RMSCC 2432) (Darling's disease fungus).